The sequence spans 119 residues: Methylglyoxal synthase (119 aa).

One can recognise an MGS-like domain in the interval 1–119; the sequence is MRIALIAHDK…GTADLIIRQF (119 aa). Substrate-binding positions include His-8, Lys-12, 34–37, and 54–55; these read TGTT and SG. Residue Asp-60 is the Proton donor/acceptor of the active site. His-87 contributes to the substrate binding site.

The protein belongs to the methylglyoxal synthase family.

The catalysed reaction is dihydroxyacetone phosphate = methylglyoxal + phosphate. In terms of biological role, catalyzes the formation of methylglyoxal from dihydroxyacetone phosphate. The sequence is that of Methylglyoxal synthase from Clostridium botulinum (strain Alaska E43 / Type E3).